Consider the following 539-residue polypeptide: Putative cysteine ligase BshC (539 aa).

The stretch at 455 to 475 (LQKNAAFIQDQLLFLERTVTK) forms a coiled coil.

The protein belongs to the BshC family.

In terms of biological role, involved in bacillithiol (BSH) biosynthesis. May catalyze the last step of the pathway, the addition of cysteine to glucosamine malate (GlcN-Mal) to generate BSH. The chain is Putative cysteine ligase BshC from Bacillus velezensis (strain DSM 23117 / BGSC 10A6 / LMG 26770 / FZB42) (Bacillus amyloliquefaciens subsp. plantarum).